Here is a 940-residue protein sequence, read N- to C-terminus: UvrABC system protein A (940 aa).

32–39 (GLSGSGKS) is a binding site for ATP. The C4-type zinc finger occupies 252-279 (CIDCGISIDEISPRLFSFNSPFGKCDYC). ABC transporter domains follow at residues 309 to 589 (WANT…EGSL) and 609 to 937 (SNGK…HYLK). An ATP-binding site is contributed by 641–648 (GVSGSGKS). A C4-type zinc finger spans residues 740-766 (CEACKGDGIIKIEMQFLSDVYVPCEIC).

It belongs to the ABC transporter superfamily. UvrA family. Forms a heterotetramer with UvrB during the search for lesions.

It is found in the cytoplasm. In terms of biological role, the UvrABC repair system catalyzes the recognition and processing of DNA lesions. UvrA is an ATPase and a DNA-binding protein. A damage recognition complex composed of 2 UvrA and 2 UvrB subunits scans DNA for abnormalities. When the presence of a lesion has been verified by UvrB, the UvrA molecules dissociate. In Clostridium tetani (strain Massachusetts / E88), this protein is UvrABC system protein A.